The chain runs to 339 residues: Phosphoribosylformylglycinamidine cyclo-ligase (339 aa).

It belongs to the AIR synthase family.

It localises to the cytoplasm. The catalysed reaction is 2-formamido-N(1)-(5-O-phospho-beta-D-ribosyl)acetamidine + ATP = 5-amino-1-(5-phospho-beta-D-ribosyl)imidazole + ADP + phosphate + H(+). Its pathway is purine metabolism; IMP biosynthesis via de novo pathway; 5-amino-1-(5-phospho-D-ribosyl)imidazole from N(2)-formyl-N(1)-(5-phospho-D-ribosyl)glycinamide: step 2/2. In Oceanobacillus iheyensis (strain DSM 14371 / CIP 107618 / JCM 11309 / KCTC 3954 / HTE831), this protein is Phosphoribosylformylglycinamidine cyclo-ligase.